A 178-amino-acid polypeptide reads, in one-letter code: Alkyl hydroperoxide reductase AhpD (178 aa).

Residue cysteine 131 is the Proton donor of the active site. Cysteine 131 and cysteine 134 are joined by a disulfide. Cysteine 134 (cysteine sulfenic acid (-SOH) intermediate) is an active-site residue.

The protein belongs to the AhpD family. Homotrimer.

The enzyme catalyses N(6)-[(R)-dihydrolipoyl]-L-lysyl-[lipoyl-carrier protein] + a hydroperoxide = N(6)-[(R)-lipoyl]-L-lysyl-[lipoyl-carrier protein] + an alcohol + H2O. Its function is as follows. Antioxidant protein with alkyl hydroperoxidase activity. Required for the reduction of the AhpC active site cysteine residues and for the regeneration of the AhpC enzyme activity. This is Alkyl hydroperoxide reductase AhpD from Streptomyces coelicolor (strain ATCC BAA-471 / A3(2) / M145).